The primary structure comprises 438 residues: Thymidine phosphorylase (438 aa).

The protein belongs to the thymidine/pyrimidine-nucleoside phosphorylase family. Homodimer.

It catalyses the reaction thymidine + phosphate = 2-deoxy-alpha-D-ribose 1-phosphate + thymine. It functions in the pathway pyrimidine metabolism; dTMP biosynthesis via salvage pathway; dTMP from thymine: step 1/2. Functionally, the enzymes which catalyze the reversible phosphorolysis of pyrimidine nucleosides are involved in the degradation of these compounds and in their utilization as carbon and energy sources, or in the rescue of pyrimidine bases for nucleotide synthesis. The chain is Thymidine phosphorylase from Burkholderia cenocepacia (strain ATCC BAA-245 / DSM 16553 / LMG 16656 / NCTC 13227 / J2315 / CF5610) (Burkholderia cepacia (strain J2315)).